A 384-amino-acid chain; its full sequence is Galactokinase (384 aa).

35–38 lines the substrate pocket; the sequence is EHTD. ATP is bound by residues S69 and 125-131; that span reads GAGLSSS. 2 residues coordinate Mg(2+): S131 and E163. The active-site Proton acceptor is the D175. Y224 lines the substrate pocket.

It belongs to the GHMP kinase family. GalK subfamily.

Its subcellular location is the cytoplasm. The enzyme catalyses alpha-D-galactose + ATP = alpha-D-galactose 1-phosphate + ADP + H(+). It functions in the pathway carbohydrate metabolism; galactose metabolism. In terms of biological role, catalyzes the transfer of the gamma-phosphate of ATP to D-galactose to form alpha-D-galactose-1-phosphate (Gal-1-P). This Aliivibrio fischeri (strain MJ11) (Vibrio fischeri) protein is Galactokinase.